A 200-amino-acid polypeptide reads, in one-letter code: Blue fluorescence protein (200 aa).

2 Lumazine-binding repeats span residues 1-111 and 112-200; these read MFKG…TGGR and SLSG…AGNW.

In terms of assembly, monomer.

It is found in the cytoplasm. Blue fluorescence protein (BFP) that can bind 6,7-dimethyl-8-ribityllumazine, riboflavin, and 6-methyl-7-oxo-8-ribityllumazine as a bound fluorophore. Has no riboflavin-synthase activity. The protein is Blue fluorescence protein of Aliivibrio fischeri (Vibrio fischeri).